Consider the following 169-residue polypeptide: Ferric-chelate reductase (NAD(P)H) (169 aa).

Tyr7 contributes to the NADP(+) binding site. Residues 27–31 (QIANT), 45–52 (CLNKENDT), 82–84 (RKS), and Lys89 contribute to the FMN site. NADP(+) is bound by residues His126 and 147–154 (YADYHLMK).

It belongs to the non-flavoprotein flavin reductase family. As to quaternary structure, homodimer. FMN serves as cofactor. It depends on FAD as a cofactor.

It carries out the reaction 2 a Fe(II)-siderophore + NAD(+) + H(+) = 2 a Fe(III)-siderophore + NADH. The enzyme catalyses 2 a Fe(II)-siderophore + NADP(+) + H(+) = 2 a Fe(III)-siderophore + NADPH. Catalyzes the reduction of bound ferric iron (Fe(3+)) in a variety of iron chelators (siderophores) using NAD(P)H as the electron donor, resulting in the release of Fe(2+). Not active with uncomplexed Fe(3+). Also reduces FMN and FAD, but not riboflavin. This Archaeoglobus fulgidus (strain ATCC 49558 / DSM 4304 / JCM 9628 / NBRC 100126 / VC-16) protein is Ferric-chelate reductase (NAD(P)H).